The primary structure comprises 202 residues: Large ribosomal subunit protein bL17 (202 aa).

Residues Ala-130–Glu-142 show a composition bias toward low complexity. Positions Ala-130–Ala-202 are disordered. Composition is skewed to acidic residues over residues Ala-143–Pro-168 and Gln-177–Ala-202.

The protein belongs to the bacterial ribosomal protein bL17 family. In terms of assembly, part of the 50S ribosomal subunit. Contacts protein L32.

In Nocardioides sp. (strain ATCC BAA-499 / JS614), this protein is Large ribosomal subunit protein bL17.